A 134-amino-acid polypeptide reads, in one-letter code: Large ribosomal subunit protein bL20 (134 aa).

It belongs to the bacterial ribosomal protein bL20 family.

In terms of biological role, binds directly to 23S ribosomal RNA and is necessary for the in vitro assembly process of the 50S ribosomal subunit. It is not involved in the protein synthesizing functions of that subunit. The protein is Large ribosomal subunit protein bL20 of Brucella abortus (strain S19).